The chain runs to 226 residues: ATP synthase F(0) complex subunit a (226 aa).

Transmembrane regions (helical) follow at residues 12–32 (PTIL…LLIP), 68–88 (WSLM…LGLL), 97–117 (QLSM…ATGF), 138–158 (IPML…ALAV), 164–184 (ITAG…LSTI), and 200–222 (TTLE…SLYL).

The protein belongs to the ATPase A chain family. In terms of assembly, component of the ATP synthase complex composed at least of ATP5F1A/subunit alpha, ATP5F1B/subunit beta, ATP5MC1/subunit c (homooctomer), MT-ATP6/subunit a, MT-ATP8/subunit 8, ATP5ME/subunit e, ATP5MF/subunit f, ATP5MG/subunit g, ATP5MK/subunit k, ATP5MJ/subunit j, ATP5F1C/subunit gamma, ATP5F1D/subunit delta, ATP5F1E/subunit epsilon, ATP5PF/subunit F6, ATP5PB/subunit b, ATP5PD/subunit d, ATP5PO/subunit OSCP. ATP synthase complex consists of a soluble F(1) head domain (subunits alpha(3) and beta(3)) - the catalytic core - and a membrane F(0) domain - the membrane proton channel (subunits c, a, 8, e, f, g, k and j). These two domains are linked by a central stalk (subunits gamma, delta, and epsilon) rotating inside the F1 region and a stationary peripheral stalk (subunits F6, b, d, and OSCP). Interacts with DNAJC30; interaction is direct.

The protein resides in the mitochondrion inner membrane. It catalyses the reaction H(+)(in) = H(+)(out). In terms of biological role, subunit a, of the mitochondrial membrane ATP synthase complex (F(1)F(0) ATP synthase or Complex V) that produces ATP from ADP in the presence of a proton gradient across the membrane which is generated by electron transport complexes of the respiratory chain. ATP synthase complex consist of a soluble F(1) head domain - the catalytic core - and a membrane F(1) domain - the membrane proton channel. These two domains are linked by a central stalk rotating inside the F(1) region and a stationary peripheral stalk. During catalysis, ATP synthesis in the catalytic domain of F(1) is coupled via a rotary mechanism of the central stalk subunits to proton translocation. With the subunit c (ATP5MC1), forms the proton-conducting channel in the F(0) domain, that contains two crucial half-channels (inlet and outlet) that facilitate proton movement from the mitochondrial intermembrane space (IMS) into the matrix. Protons are taken up via the inlet half-channel and released through the outlet half-channel, following a Grotthuss mechanism. The protein is ATP synthase F(0) complex subunit a of Hylobates lar (Lar gibbon).